The chain runs to 341 residues: Zinc finger protein ZIC 4 (341 aa).

A disordered region spans residues 36–66 (HHGPQLAASSNPSVLPGLHEQPPQASHSRPL). Residues 135–169 (LICKWLGDDSPMSPRPCSKTFSTMHELVTHVTVEH) form a C2H2-type 1; atypical zinc finger. The segment at 178 to 205 (HICFWEECPRQGKPFKAKYKLVNHIRVH) adopts a C2H2-type 2; atypical zinc-finger fold. 3 consecutive C2H2-type zinc fingers follow at residues 211–235 (FPCP…KRTH), 241–265 (FRCE…SHVH), and 271–295 (YMCK…MKVH). Positions 289–309 (RKHMKVHGRSPPPSSGYDSAI) are disordered.

Belongs to the GLI C2H2-type zinc-finger protein family. In terms of tissue distribution, exclusively expressed in the cerebellum.

The protein localises to the nucleus. Its function is as follows. Binds to DNA. The polypeptide is Zinc finger protein ZIC 4 (Zic4) (Mus musculus (Mouse)).